The sequence spans 152 residues: Protein Smg homolog (152 aa).

The protein belongs to the Smg family.

The protein is Protein Smg homolog of Chromobacterium violaceum (strain ATCC 12472 / DSM 30191 / JCM 1249 / CCUG 213 / NBRC 12614 / NCIMB 9131 / NCTC 9757 / MK).